Reading from the N-terminus, the 370-residue chain is Phosphate-binding protein PstS 3 (370 aa).

Positions 1-22 (MKLNRFGAAVGVLAAGALVLSA) are cleaved as a signal peptide. C23 carries N-palmitoyl cysteine lipidation. C23 carries S-diacylglycerol cysteine lipidation. Phosphate is bound by residues 56–58 (STA), S86, D104, and 191–193 (SGT).

Belongs to the PstS family. As to quaternary structure, the complex is composed of two ATP-binding proteins (PstB), two transmembrane proteins (PstC and PstA) and a solute-binding protein (PstS).

It localises to the cell membrane. Its function is as follows. Part of the ABC transporter complex PstSACB involved in phosphate import. The chain is Phosphate-binding protein PstS 3 (pstS3) from Mycobacterium bovis (strain ATCC BAA-935 / AF2122/97).